The following is a 124-amino-acid chain: MRHYEVVFIVHPDQSEQVPAMVERYQSLVTGQNGAVHRLEDWGRRQLAYPIQKLVKAHYVCMNIECNQATLDELEHSFRYNDAVLRHLVIKTKKAPVGASIMMKSVEREEARKASAEAAAVQAE.

The protein belongs to the bacterial ribosomal protein bS6 family.

Binds together with bS18 to 16S ribosomal RNA. The polypeptide is Small ribosomal subunit protein bS6 (Bordetella avium (strain 197N)).